A 782-amino-acid polypeptide reads, in one-letter code: Probable methionine--tRNA ligase, cytoplasmic (782 aa).

A 'HIGH' region motif is present at residues 231-241; that stretch reads PYVNNVPHLGN. Residues 551–555 carry the 'KMSKS' region motif; that stretch reads KFSKS.

This sequence belongs to the class-I aminoacyl-tRNA synthetase family.

It is found in the cytoplasm. The catalysed reaction is tRNA(Met) + L-methionine + ATP = L-methionyl-tRNA(Met) + AMP + diphosphate. The polypeptide is Probable methionine--tRNA ligase, cytoplasmic (rar1) (Schizosaccharomyces pombe (strain 972 / ATCC 24843) (Fission yeast)).